Here is a 432-residue protein sequence, read N- to C-terminus: D-amino acid dehydrogenase (432 aa).

Residue 3-17 (VLVLGSGVIGTTTAY) coordinates FAD.

This sequence belongs to the DadA oxidoreductase family. The cofactor is FAD.

The enzyme catalyses a D-alpha-amino acid + A + H2O = a 2-oxocarboxylate + AH2 + NH4(+). Its pathway is amino-acid degradation; D-alanine degradation; NH(3) and pyruvate from D-alanine: step 1/1. Oxidative deamination of D-amino acids. The sequence is that of D-amino acid dehydrogenase from Azotobacter vinelandii (strain DJ / ATCC BAA-1303).